A 734-amino-acid chain; its full sequence is Tripartite terminase subunit 3 (734 aa).

Positions 184-190 (ASKRARV) match the Nuclear localization signal motif. A Walker A motif motif is present at residues 259–266 (VPRRHGKT). Positions 353–358 (LLFVDE) match the Walker B motif motif. The active-site For ATPase activity is the Glu358. Residues Asp511, Glu583, and Asp707 each act as for nuclease activity in the active site.

Belongs to the herpesviridae TRM3 protein family. In terms of assembly, interacts with the terminase subunits TRM1 and TRM2. Interacts with portal protein.

It localises to the host nucleus. Functionally, component of the molecular motor that translocates viral genomic DNA in empty capsid during DNA packaging. Forms a tripartite terminase complex together with TRM1 and TRM2 in the host cytoplasm. Once the complex reaches the host nucleus, it interacts with the capsid portal vertex. This portal forms a ring in which genomic DNA is translocated into the capsid. TRM3 carries an RNase H-like nuclease activity that plays an important role for the cleavage of concatemeric viral DNA into unit length genomes. This chain is Tripartite terminase subunit 3, found in Equus caballus (Horse).